A 150-amino-acid polypeptide reads, in one-letter code: MKCPFCGYEETKVLDSRPVSNGTSIRRRRECLQCQARFTTYERYEQTRIRIIKKDGRRELYDRKKLMNGILKACEKRPVSTDQIEEIVDNIEEQLRRSGNSEIYSSEIGDKVMEQLKSIDQVAYVRFASVYKEFRDLDSFLQAIRELKNS.

A zinc finger spans residues 3 to 34 (CPFCGYEETKVLDSRPVSNGTSIRRRRECLQC). Residues 49–139 (IRIIKKDGRR…VYKEFRDLDS (91 aa)) enclose the ATP-cone domain.

It belongs to the NrdR family. The cofactor is Zn(2+).

Negatively regulates transcription of bacterial ribonucleotide reductase nrd genes and operons by binding to NrdR-boxes. The polypeptide is Transcriptional repressor NrdR (Petrotoga mobilis (strain DSM 10674 / SJ95)).